Consider the following 1167-residue polypeptide: MKWLFHTLLCMASLKPQGAFNLDVDWAWVTALQPGAPAVLSSLLHQDPSNNQTCLLVARRSSNRNTAALYRCAISISPDEIACQPVEHICMPKGRYQGVTLVGNHNGVLVCIQVQARKFRSLNSELTGACSLLTPNLDLQAQAYFSDLEGFLDPGAHVDSGDYCRSKGGSTGEEKKSARRRRTVEEEDEEEDGTEIAIVLDGSGSIEPSDFQKAKNFISTMMRNFYEKCFECNFALVQYGAVIQTEFDLQESRDINASLAKVQSIVQVKEVTKTASAMQHVLDNIFIPSRGSRKKALKVMVVLTDGDIFGDPLNLTTVINSPKMQGVVRFAIGVGDAFKNNNTYRELKLIASDPKEAHTFKVTNYSALDGLLSKLQQHIVHMEGTVGDALQYQLAQTGFSAQILDKGQVLLGTVGAFNWSGGALLYSTQNGRGCFLNQTAKEDSRTVQYSYLGYSLAVLHKAHGVSYVAGAPRHKLRGAVFELRKEDREEDAFVRRIEGEQMGSYFGSVLCPVDIDMDGTTDFLLVAAPFYHIRGEEGRVYVYQVPEQDASFSLAHTLSGHPGLTNSRFGFAMAAVGDINQDKFTDVAIGAPLEGFGAGDGASYGSVYIYNGHSGGLYDSPSQQIRASSVASGLHYFGMSVSGGLDFNGDGLADITVGSRDSAVVLRSRPVVDLTVSMTFTPDALPMVFIGKMDVKLCFEVDSSGVASEPGLREMFLNFTVDVDVTKQRQRLQCEDSSGCQSCLRKWNGGSFLCEHFWLISTEELCEEDCFSNITIKVTYEFQTSGGRRDYPNPTLDHYKEPSAIFQLPYEKDCKNKVFCIAEIQLTTNISQQELVVGVTKEVTMNISLTNSGEDSYMTNMALNYPRNLQFKKIQKPVSPDVQCDDPKPVASVLVMNCKIGHPILKRSSVNVSVTWQLEESVFPNRTADITVTISNSNEKSLARETRSLQFRHAFIAVLSRPSVMYMNTSQSPSDHKEFFFNVHGENLFGAVFQLQICVPIKLQDFQIVRVKNLTKTQDHTECTQSQEPACGSDPVQHVKEWHSVVCAITSNKENVTVAAEISVGHTKQLLRDVSELPILGEISFNKSLYEGLNAENHRTKITVIFLKEEETRSLPLIIGSSIGGLLVLVVIIAILFKCGFFKRKYQQLNLESTRRAQLKADSLLQD.

The signal sequence occupies residues 1-19 (MKWLFHTLLCMASLKPQGA). Over 20 to 1114 (FNLDVDWAWV…IFLKEEETRS (1095 aa)) the chain is Extracellular. 2 FG-GAP repeats span residues 27–81 (AWVT…PDEI) and 84–142 (QPVE…LQAQ). A glycan (N-linked (GlcNAc...) asparagine) is linked at N51. 2 disulfide bridges follow: C72/C83 and C130/C164. The interval 149 to 192 (EGFLDPGAHVDSGDYCRSKGGSTGEEKKSARRRRTVEEEDEEED) is X-domain (extra domain). The segment at 163–191 (YCRSKGGSTGEEKKSARRRRTVEEEDEEE) is disordered. In terms of domain architecture, VWFA spans 193 to 382 (GTEIAIVLDG…SKLQQHIVHM (190 aa)). 6 N-linked (GlcNAc...) asparagine glycosylation sites follow: N256, N314, N341, N364, N418, and N437. The stretch at 383 to 435 (EGTVGDALQYQLAQTGFSAQILDKGQVLLGTVGAFNWSGGALLYSTQNGRGCF) is one FG-GAP 3 repeat. FG-GAP repeat units follow at residues 438–491 (QTAK…REED), 492–552 (AFVR…DASF), 555–619 (AHTL…GLYD), and 623–683 (QQIR…FTPD). Positions 514, 516, 518, 522, 578, 580, 582, 586, 646, 648, 650, and 654 each coordinate Ca(2+). C698 and C754 are joined by a disulfide. 2 N-linked (GlcNAc...) asparagine glycosylation sites follow: N718 and N773. C814 and C820 are joined by a disulfide. N-linked (GlcNAc...) asparagine glycans are attached at residues N829 and N846. A disulfide bridge links C884 with C898. N-linked (GlcNAc...) asparagine glycosylation is found at N911, N925, N968, and N1013. 2 disulfide bridges follow: C998–C1023 and C1031–C1047. 2 N-linked (GlcNAc...) asparagine glycosylation sites follow: N1055 and N1086. The chain crosses the membrane as a helical span at residues 1115–1137 (LPLIIGSSIGGLLVLVVIIAILF). At 1138–1167 (KCGFFKRKYQQLNLESTRRAQLKADSLLQD) the chain is on the cytoplasmic side. The GFFKR motif signature appears at 1140–1144 (GFFKR).

This sequence belongs to the integrin alpha chain family. In terms of assembly, heterodimer of an alpha and a beta subunit. The alpha subunit is composed of a heavy and a light chains linked by a disulfide bond. Alpha-E associates with beta-7.

The protein resides in the membrane. In terms of biological role, integrin alpha-E/beta-7 is a receptor for E-cadherin. It mediates adhesion of intra-epithelial T-lymphocytes to epithelial cell monolayers. Mice expressing a null mutation of the alpha-E subunit gene exhibit a marked reduction in the numbers of intraepithelial lymphocytes in the gut and in the development of gut-associated lymphoid aggregates, supporting a specific role for this integrin in mediating retention of lymphocytes in the intestinal wall. The chain is Integrin alpha-E (Itgae) from Mus musculus (Mouse).